The sequence spans 96 residues: ATYYKVKLLTPEGEKEFECPDDVYILDNAEEIGIDLPYSCRAGSCSSCAGKVVSGKVDNSDNSFLNDDNMDAGYVLTCHAYANSDVVIETHKEEEV.

A 2Fe-2S ferredoxin-type domain is found at Tyr-4 to Glu-94. Cys-40, Cys-45, Cys-48, and Cys-78 together coordinate [2Fe-2S] cluster.

The protein belongs to the 2Fe2S plant-type ferredoxin family. [2Fe-2S] cluster is required as a cofactor.

The protein localises to the plastid. The protein resides in the chloroplast. Functionally, ferredoxins are iron-sulfur proteins that transfer electrons in a wide variety of metabolic reactions. In Panax ginseng (Korean ginseng), this protein is Ferredoxin.